The sequence spans 269 residues: uncharacterized protein (269 aa).

A run of 6 helical transmembrane segments spans residues 21-43 (LNVW…ILFT), 48-70 (LFLI…FSLI), 121-143 (YLIL…VFTF), 147-166 (FIIA…FWII), 205-227 (SLEV…LFQF), and 242-264 (FVAF…YLLW).

It localises to the cell membrane. This is an uncharacterized protein from Aquifex aeolicus (strain VF5).